Reading from the N-terminus, the 699-residue chain is Cysteine--tRNA ligase (699 aa).

The interval 1–226 is unknown; the sequence is MTTITEKRLT…SEQQRLIHNP (226 aa). Zn(2+) is bound at residue Cys-254. Positions 256–266 match the 'HIGH' region motif; sequence MTVYDYCHLGH. Zn(2+) contacts are provided by Cys-435, His-460, and Glu-464. A 'KMSKS' region motif is present at residues 508–512; sequence KMSKS. Position 511 (Lys-511) interacts with ATP.

It belongs to the class-I aminoacyl-tRNA synthetase family. In terms of assembly, monomer. It depends on Zn(2+) as a cofactor.

It is found in the cytoplasm. It catalyses the reaction tRNA(Cys) + L-cysteine + ATP = L-cysteinyl-tRNA(Cys) + AMP + diphosphate. In Neisseria meningitidis serogroup A / serotype 4A (strain DSM 15465 / Z2491), this protein is Cysteine--tRNA ligase (cysS).